A 1597-amino-acid polypeptide reads, in one-letter code: Transmembrane protein 131-like (1597 aa).

Residues 1-40 (MAGLRRPQSGAYRRTAAAVNLLLGVFQVLLSCCRPGGAQG) form the signal peptide. Residues 41–869 (QAFEPLPNVV…VVPGPSWEES (829 aa)) are Extracellular-facing. 4 N-linked (GlcNAc...) asparagine glycosylation sites follow: Asn343, Asn593, Asn709, and Asn846. The interval 696–916 (DYGKVTSLIL…QNGSSSSQQN (221 aa)) is required for Wnt-signaling inhibition and LRP6 degradation. A helical transmembrane segment spans residues 870–890 (FWRLTVFFVSLSLLGVILIAF). The Cytoplasmic segment spans residues 891 to 1597 (QQAQYILMEF…SRDSSYCGNM (707 aa)). The span at 907-917 (QNGSSSSQQNG) shows a compositional bias: low complexity. Disordered stretches follow at residues 907–928 (QNGS…SHPH), 1096–1240 (AELK…EQRL), and 1252–1322 (DGAG…SDCD). Residues 1213 to 1222 (RPCRRNKKRA) show a composition bias toward basic residues. The segment covering 1223-1239 (SAQASSSPRPSEQSEQR) has biased composition (low complexity). Positions 1269–1290 (PERREEDSYYQKSEKKCADKFC) are enriched in basic and acidic residues. A compositionally biased stretch (low complexity) spans 1291 to 1319 (SDSSSDCGSSSGSVRASRGSWGSWSSSSS).

Belongs to the TMEM131 family.

It is found in the cell membrane. The protein localises to the endoplasmic reticulum. It localises to the cytoplasm. In its membrane-associated form, antagonizes canonical Wnt signaling by triggering lysosome-dependent degradation of Wnt-activated LRP6. Regulates thymocyte proliferation. The sequence is that of Transmembrane protein 131-like from Mus musculus (Mouse).